Here is a 401-residue protein sequence, read N- to C-terminus: Dynactin subunit 2 (401 aa).

The interval 1 to 25 (MADPKYADLPGIARNEPDVYETSDL) is disordered. Alanine 2 carries the post-translational modification N-acetylalanine. Tyrosine 6 is modified (phosphotyrosine). Serine 83 is subject to Phosphoserine. A Phosphotyrosine modification is found at tyrosine 86. Residues 99–132 (PQQKYQRLLHEVQELTTEVEKIKTTVKESATEEK) adopt a coiled-coil conformation. Residues threonine 134 and threonine 198 each carry the phosphothreonine modification. The stretch at 214–244 (EQDKFSQAAKVAELEKRLTELETAVRCDQDA) forms a coiled coil. At serine 320 the chain carries Phosphoserine. A coiled-coil region spans residues 379-399 (RENLATVEGNFASIDERMKKL).

It belongs to the dynactin subunit 2 family. In terms of assembly, subunit of dynactin, a multiprotein complex part of a tripartite complex with dynein and a adapter, such as BICDL1, BICD2 or HOOK3. The dynactin complex is built around ACTR1A/ACTB filament and consists of an actin-related filament composed of a shoulder domain, a pointed end and a barbed end. Its length is defined by its flexible shoulder domain. The soulder is composed of 2 DCTN1 subunits, 4 DCTN2 and 2 DCTN3. The 4 DCNT2 (via N-terminus) bind the ACTR1A filament and act as molecular rulers to determine the length. The pointed end is important for binding dynein-dynactin cargo adapters and consists of 4 subunits: ACTR10, DCNT4, DCTN5 and DCTN6. The barbed end is composed of a CAPZA1:CAPZB heterodimers, which binds ACTR1A/ACTB filament and dynactin and stabilizes dynactin. Interacts with BICD2 and CEP135. Interacts with DYNAP. Interacts with ECPAS. Interacts with MAPRE1.

The protein localises to the cytoplasm. Its subcellular location is the cytoskeleton. It is found in the microtubule organizing center. It localises to the centrosome. The protein resides in the membrane. Its function is as follows. Part of the dynactin complex that activates the molecular motor dynein for ultra-processive transport along microtubules. In the dynactin soulder domain, binds the ACTR1A filament and acts as a molecular ruler to determine the length. Modulates cytoplasmic dynein binding to an organelle, and plays a role in prometaphase chromosome alignment and spindle organization during mitosis. Involved in anchoring microtubules to centrosomes. May play a role in synapse formation during brain development. The chain is Dynactin subunit 2 from Homo sapiens (Human).